The following is a 478-amino-acid chain: Pathogenicity cluster 5 protein d (478 aa).

The N-terminal stretch at Met1–Ala19 is a signal peptide. Disordered regions lie at residues Arg35–Asn89 and Asn299–Gly400. Residues Lys38–Asn64 show a composition bias toward low complexity. Over residues Gln65–Asn89 the composition is skewed to polar residues. Over residues Asn316–Gly326 the composition is skewed to gly residues. 2 stretches are compositionally biased toward low complexity: residues Gly327–Ala348 and Thr379–Asn393. 2 N-linked (GlcNAc...) asparagine glycosylation sites follow: Asn328 and Asn332.

The protein resides in the secreted. Its function is as follows. Secreted protein required for appressorial penetration of intact host epidermal cells and for pathogenicit, but not for subsequent biotrophic and necrotrophic colonization of leaves. The chain is Pathogenicity cluster 5 protein d from Colletotrichum graminicola (strain M1.001 / M2 / FGSC 10212) (Maize anthracnose fungus).